A 237-amino-acid polypeptide reads, in one-letter code: Ribose-5-phosphate isomerase A (237 aa).

Residues 33 to 36 (TGST), 90 to 93 (DGAD), and 103 to 106 (KGGG) contribute to the substrate site. E112 acts as the Proton acceptor in catalysis. K130 contacts substrate.

The protein belongs to the ribose 5-phosphate isomerase family. As to quaternary structure, homodimer.

It carries out the reaction aldehydo-D-ribose 5-phosphate = D-ribulose 5-phosphate. It participates in carbohydrate degradation; pentose phosphate pathway; D-ribose 5-phosphate from D-ribulose 5-phosphate (non-oxidative stage): step 1/1. In terms of biological role, catalyzes the reversible conversion of ribose-5-phosphate to ribulose 5-phosphate. This is Ribose-5-phosphate isomerase A from Gloeothece citriformis (strain PCC 7424) (Cyanothece sp. (strain PCC 7424)).